Reading from the N-terminus, the 172-residue chain is 3-hydroxydecanoyl-[acyl-carrier-protein] dehydratase (172 aa).

His-71 is an active-site residue.

The protein belongs to the thioester dehydratase family. FabA subfamily. In terms of assembly, homodimer.

The protein resides in the cytoplasm. It carries out the reaction a (3R)-hydroxyacyl-[ACP] = a (2E)-enoyl-[ACP] + H2O. The enzyme catalyses (3R)-hydroxydecanoyl-[ACP] = (2E)-decenoyl-[ACP] + H2O. It catalyses the reaction (2E)-decenoyl-[ACP] = (3Z)-decenoyl-[ACP]. It functions in the pathway lipid metabolism; fatty acid biosynthesis. In terms of biological role, necessary for the introduction of cis unsaturation into fatty acids. Catalyzes the dehydration of (3R)-3-hydroxydecanoyl-ACP to E-(2)-decenoyl-ACP and then its isomerization to Z-(3)-decenoyl-ACP. Can catalyze the dehydratase reaction for beta-hydroxyacyl-ACPs with saturated chain lengths up to 16:0, being most active on intermediate chain length. The chain is 3-hydroxydecanoyl-[acyl-carrier-protein] dehydratase from Vibrio parahaemolyticus serotype O3:K6 (strain RIMD 2210633).